We begin with the raw amino-acid sequence, 79 residues long: Small ribosomal subunit protein bS18 (79 aa).

This sequence belongs to the bacterial ribosomal protein bS18 family. As to quaternary structure, part of the 30S ribosomal subunit. Forms a tight heterodimer with protein bS6.

Binds as a heterodimer with protein bS6 to the central domain of the 16S rRNA, where it helps stabilize the platform of the 30S subunit. The protein is Small ribosomal subunit protein bS18 of Streptococcus suis (strain 98HAH33).